The chain runs to 308 residues: Formamidopyrimidine-DNA glycosylase (308 aa).

Catalysis depends on proline 2, which acts as the Schiff-base intermediate with DNA. Glutamate 3 serves as the catalytic Proton donor. The active-site Proton donor; for beta-elimination activity is lysine 61. Residues histidine 100, arginine 120, and arginine 181 each contribute to the DNA site. The FPG-type zinc finger occupies 267–301; sequence AVYGQEGRPCPRCGALVRRDAFMNRSSFSCPVCQP. The Proton donor; for delta-elimination activity role is filled by arginine 291.

It belongs to the FPG family. As to quaternary structure, monomer. The cofactor is Zn(2+).

It carries out the reaction Hydrolysis of DNA containing ring-opened 7-methylguanine residues, releasing 2,6-diamino-4-hydroxy-5-(N-methyl)formamidopyrimidine.. The enzyme catalyses 2'-deoxyribonucleotide-(2'-deoxyribose 5'-phosphate)-2'-deoxyribonucleotide-DNA = a 3'-end 2'-deoxyribonucleotide-(2,3-dehydro-2,3-deoxyribose 5'-phosphate)-DNA + a 5'-end 5'-phospho-2'-deoxyribonucleoside-DNA + H(+). Involved in base excision repair of DNA damaged by oxidation or by mutagenic agents. Acts as a DNA glycosylase that recognizes and removes damaged bases. Has a preference for oxidized purines, such as 7,8-dihydro-8-oxoguanine (8-oxoG). Has AP (apurinic/apyrimidinic) lyase activity and introduces nicks in the DNA strand. Cleaves the DNA backbone by beta-delta elimination to generate a single-strand break at the site of the removed base with both 3'- and 5'-phosphates. The polypeptide is Formamidopyrimidine-DNA glycosylase (Kineococcus radiotolerans (strain ATCC BAA-149 / DSM 14245 / SRS30216)).